The primary structure comprises 238 residues: Ribitol-5-phosphate cytidylyltransferase 2 (238 aa).

Residues 7–10 and 81–87 each bind CTP; these read LAGG and GTDRNET.

The protein belongs to the IspD/TarI cytidylyltransferase family. TarI subfamily. As to quaternary structure, heterodimer together with TarJ.

It catalyses the reaction D-ribitol 5-phosphate + CTP + H(+) = CDP-L-ribitol + diphosphate. The protein operates within cell wall biogenesis; poly(ribitol phosphate) teichoic acid biosynthesis. Functionally, catalyzes the transfer of the cytidylyl group of CTP to D-ribitol 5-phosphate. The sequence is that of Ribitol-5-phosphate cytidylyltransferase 2 from Staphylococcus aureus (strain NCTC 8325 / PS 47).